Reading from the N-terminus, the 7763-residue chain is Nonribosomal peptide synthetase agiA (7763 aa).

Positions 20-168 (APSVMQEEMI…DGWSARALLE (149 aa)) are condensation 1. The tract at residues 469–866 (EQAASKWPSK…GRADGQIKLR (398 aa)) is adenylation 1. The Carrier 1 domain maps to 995–1071 (LPESPAERLL…DVARAMSPSS (77 aa)). Ser1032 carries the post-translational modification O-(pantetheine 4'-phosphoryl)serine. Positions 1104 to 1526 (IYPCTPQQEG…GLSDQKLITG (423 aa)) are condensation 2. Residues 1562–1968 (FEMQADMTPQ…GRIDSQIKLR (407 aa)) form an adenylation 2 region. Positions 2090–2166 (WEQGSIEDKI…SQAKCATSHT (77 aa)) constitute a Carrier 2 domain. The residue at position 2127 (Ser2127) is an O-(pantetheine 4'-phosphoryl)serine. The interval 2212-2556 (DHFNQSVLLD…IMPLVFNYQG (345 aa)) is epimerase (E). The condensation 3 stretch occupies residues 2676 to 3016 (DIIPCTPMQR…PALVNTLLNF (341 aa)). The segment at 3136–3531 (WAAQVPEKVA…GRMDDQIKIR (396 aa)) is adenylation 3. The 77-residue stretch at 3667 to 3743 (GPESPTEIML…ELATILNTSY (77 aa)) folds into the Carrier 3 domain. An O-(pantetheine 4'-phosphoryl)serine modification is found at Ser3704. Positions 3789-4238 (VMPCTPFQEG…ISQSIDALVQ (450 aa)) are condensation 4. The adenylation 4 stretch occupies residues 4321-4687 (VGSQQPIIPI…GRFDRQIKIR (367 aa)). In terms of domain architecture, Carrier 4 spans 4806–4880 (APTTEREKVI…DLARQLESTA (75 aa)). Ser4840 carries the post-translational modification O-(pantetheine 4'-phosphoryl)serine. The segment at 4902 to 5339 (SFAQGRLWFL…ALLNDLSMHD (438 aa)) is condensation 5. Positions 5361–5765 (FRQEARSHPD…GRRDDQVKIR (405 aa)) are adenylation 5. Residues 5820-5975 (DAWKNVFDTE…YLSEIVQKLV (156 aa)) form an S-adenosyl-L-methionine-dependent N-methyltransferase region. The region spanning 6306–6381 (EYGSEMERIL…RLADRLLSKQ (76 aa)) is the Carrier 5 domain. Ser6341 carries the post-translational modification O-(pantetheine 4'-phosphoryl)serine. The tract at residues 6378 to 6399 (LSKQSDSNTEANTSTDGKTQHS) is disordered. Residues 6379-6399 (SKQSDSNTEANTSTDGKTQHS) show a composition bias toward polar residues. Residues 6424–6883 (MPCTPFQEGV…TVGDAEEAAL (460 aa)) are condensation 6. The segment at 6913 to 7327 (RQAMESPCKI…GRMDSQVKLR (415 aa)) is adenylation 6. Residues 7446–7522 (PSPGTLEATL…SQAFRILCDV (77 aa)) form the Carrier 6 domain. Ser7483 is subject to O-(pantetheine 4'-phosphoryl)serine. A thioesterase (TE) region spans residues 7542 to 7638 (TMVLIHPFFG…TGKGSPFSTV (97 aa)).

Belongs to the NRP synthetase family.

In terms of biological role, nonribosomal peptide synthetase; part of the gene cluster that mediates the biosynthesis of the aspergillicins A and F, 2 cryptic cyclic hexa-depsipeptides. The hexamodular NRPS agiA catalyzes the condensation of the six amino acid residues including N-Me-L-O-Me-tyrosine, L-proline 1, L-proline 2, D-isoleucine, O-acetyl-threonine, and L-isoleucine. The starting condensation domain (C1) of agiA probably loads acetyl-CoA which is condensed on the N-terminus of threonine by the first module to yield O-acetyl-threonine. The second module then loads L-isoleucine. The epimerase (E) domain on module 2 is probably involved in the formation of the D-isoleucine moiety. Modules 3 and 4 further load 2 successive L-prolines. Module 5 is then involved in the condensation of O-Me-L-tyrosine produced by the O-methyltransferase agiB and the N-methyl transferase (NMeT) domain on module 5 probably catalyzes the N-methylation to yield the N-Me-L-O-Me-tyrosine moiety. The A domain of module 5 loads preferentially O-Me-L-tyrosine, but it can also accept L-phenylalanine, which leads to the production of aspergillicin G. Module 6 then loads the last residue, L-isoleucine. The C-terminal thiolesterase (TE) domain probably cyclizes the peptide using the hydroxy group from threonine to form the cyclic depsipeptide. The polypeptide is Nonribosomal peptide synthetase agiA (Aspergillus flavus (strain ATCC 200026 / FGSC A1120 / IAM 13836 / NRRL 3357 / JCM 12722 / SRRC 167)).